Here is a 453-residue protein sequence, read N- to C-terminus: Ribulose bisphosphate carboxylase large chain (453 aa).

A propeptide spanning residues 1 to 2 (MS) is cleaved from the precursor. Pro3 bears the N-acetylproline mark. An N6,N6,N6-trimethyllysine modification is found at Lys14. The substrate site is built by Asn123 and Thr173. Lys175 serves as the catalytic Proton acceptor. Lys177 serves as a coordination point for substrate. Mg(2+)-binding residues include Lys201, Asp203, and Glu204. Lys201 carries the post-translational modification N6-carboxylysine. The active-site Proton acceptor is His294. Positions 295, 327, and 379 each coordinate substrate.

It belongs to the RuBisCO large chain family. Type I subfamily. Heterohexadecamer of 8 large chains and 8 small chains; disulfide-linked. The disulfide link is formed within the large subunit homodimers. Mg(2+) serves as cofactor. In terms of processing, the disulfide bond which can form in the large chain dimeric partners within the hexadecamer appears to be associated with oxidative stress and protein turnover.

The protein localises to the plastid. The protein resides in the chloroplast. It carries out the reaction 2 (2R)-3-phosphoglycerate + 2 H(+) = D-ribulose 1,5-bisphosphate + CO2 + H2O. The enzyme catalyses D-ribulose 1,5-bisphosphate + O2 = 2-phosphoglycolate + (2R)-3-phosphoglycerate + 2 H(+). Functionally, ruBisCO catalyzes two reactions: the carboxylation of D-ribulose 1,5-bisphosphate, the primary event in carbon dioxide fixation, as well as the oxidative fragmentation of the pentose substrate in the photorespiration process. Both reactions occur simultaneously and in competition at the same active site. In Galium aparine (Catchweed bedstraw), this protein is Ribulose bisphosphate carboxylase large chain.